Consider the following 301-residue polypeptide: Multifunctional dioxygenase prhA (301 aa).

Fe cation is bound by residues His-130, Asp-132, and His-214.

It belongs to the PhyH family. Homodimer. Fe cation serves as cofactor.

The catalysed reaction is preaustinoid A1 + 2-oxoglutarate + O2 = berkeleyone B + succinate + CO2 + H2O. It catalyses the reaction berkeleyone B + 2-oxoglutarate + O2 = berkeleydione + succinate + CO2 + H2O. The enzyme catalyses preaustinoid A + 2 2-oxoglutarate + 2 O2 = berkeleytrione + 2 succinate + 2 CO2 + H2O. The protein operates within secondary metabolite biosynthesis; terpenoid biosynthesis. Multifunctional dioxygenase; part of the gene cluster that mediates the biosynthesis of paraherquonin, a meroterpenoid with a unique, highly congested hexacyclic molecular architecture. The first step of the pathway is the synthesis of 3,5-dimethylorsellinic acid (DMOA) by the polyketide synthase prhL. Synthesis of DMOA is followed by farnesylation by the prenyltransferase prhE, methylesterification by the methyl-transferase prhM, epoxidation of the prenyl chain by the flavin-dependent monooxygenase prhF, and cyclization of the farnesyl moiety by the terpene cyclase prhH, to yield the tetracyclic intermediate, protoaustinoid A. The short chain dehydrogenase prhI then oxidizes the C-3 alcohol group of the terpene cyclase product to transform protoaustinoid A into protoaustinoid B. The FAD-binding monooxygenase prhJ catalyzes the oxidation of protoaustinoid B into preaustinoid A which is further oxidized into preaustinoid A1 by FAD-binding monooxygenase phrK. Finally, prhA leads to berkeleydione via the berkeleyone B intermediate. PrhA is a multifunctional dioxygenase that first desaturates at C5-C6 to form berkeleyone B, followed by rearrangement of the A/B-ring to form the cycloheptadiene moiety in berkeleydione. Berkeleydione serves as the key intermediate for the biosynthesis of paraherquonin as well as many other meroterpenoids. The cytochrome P450 monooxygenases prhB, prhD, and prhN, as well as the isomerase prhC, are probably involved in the late stage of paraherquonin biosynthesis, after the production of berkeleydione. Especially prhC might be a multifunctional enzyme that catalyzes the D-ring expansion via intramolecular methoxy rearrangement, as well as the hydrolysis of the expanded D-ring. The protein is Multifunctional dioxygenase prhA of Penicillium brasilianum.